Reading from the N-terminus, the 836-residue chain is Translation initiation factor IF-2 (836 aa).

Residues 1–234 (MSDTDGKKPL…SLAAMKRKQE (234 aa)) are disordered. Polar residues predominate over residues 18 to 27 (SGQVKQSFSH). Over residues 50-60 (SGSSTTTSSPS) the composition is skewed to low complexity. A compositionally biased stretch (basic and acidic residues) spans 88 to 156 (KLREVEDAKR…ATRRAEEAKR (69 aa)). The segment covering 167–176 (PAESRASAPP) has biased composition (low complexity). The span at 185–206 (SRKEREREADRDRTTKKDDSRR) shows a compositional bias: basic and acidic residues. The 169-residue stretch at 333-501 (PRPPIITIMG…NIALQAEILD (169 aa)) folds into the tr-type G domain. The segment at 342-349 (GHVDHGKT) is G1. 342–349 (GHVDHGKT) is a GTP binding site. Residues 367 to 371 (GITQH) are G2. Residues 389–392 (DTPG) are G3. Residues 389 to 393 (DTPGH) and 443 to 446 (NKID) each bind GTP. The interval 443–446 (NKID) is G4. The interval 479–481 (SAK) is G5.

The protein belongs to the TRAFAC class translation factor GTPase superfamily. Classic translation factor GTPase family. IF-2 subfamily.

The protein resides in the cytoplasm. One of the essential components for the initiation of protein synthesis. Protects formylmethionyl-tRNA from spontaneous hydrolysis and promotes its binding to the 30S ribosomal subunits. Also involved in the hydrolysis of GTP during the formation of the 70S ribosomal complex. The protein is Translation initiation factor IF-2 of Cereibacter sphaeroides (strain ATCC 17029 / ATH 2.4.9) (Rhodobacter sphaeroides).